The following is a 349-amino-acid chain: Putative inosamine-phosphate amidinotransferase 2 (349 aa).

It belongs to the amidinotransferase family.

It catalyses the reaction 1-amino-1-deoxy-scyllo-inositol 4-phosphate + L-arginine = 1-guanidino-1-deoxy-scyllo-inositol 4-phosphate + L-ornithine. Its pathway is antibiotic biosynthesis; streptomycin biosynthesis. Its function is as follows. It is not obvious if strB2 participates in streptomycin biosynthesis as an inosamine-phosphate amidinotransferase. Attempt to measure its activity have failed and the nucleophilic cysteine which is the key residue for amidine transfer is not conserved but replaced by a glycine residue. This is Putative inosamine-phosphate amidinotransferase 2 (strB2) from Streptomyces griseus.